Here is a 229-residue protein sequence, read N- to C-terminus: GTP cyclohydrolase 1 (229 aa).

The Zn(2+) site is built by Cys-116, His-119, and Cys-187.

Belongs to the GTP cyclohydrolase I family. In terms of assembly, toroid-shaped homodecamer, composed of two pentamers of five dimers.

The catalysed reaction is GTP + H2O = 7,8-dihydroneopterin 3'-triphosphate + formate + H(+). The protein operates within cofactor biosynthesis; 7,8-dihydroneopterin triphosphate biosynthesis; 7,8-dihydroneopterin triphosphate from GTP: step 1/1. The chain is GTP cyclohydrolase 1 from Synechococcus sp. (strain JA-3-3Ab) (Cyanobacteria bacterium Yellowstone A-Prime).